A 106-amino-acid chain; its full sequence is Glycine/glutamate-rich protein sgp1 (106 aa).

Residues 1 to 20 (MKYSLIFILTLACLIASSLA) form the signal peptide. Residues 20-66 (ARPEGEEKPADDAAGDKKEEGAEGDKTAAGGDEGFTGGDGKNAGGAG) are disordered. Basic and acidic residues predominate over residues 22 to 45 (PEGEEKPADDAAGDKKEEGAEGDK). A compositionally biased stretch (gly residues) spans 50 to 66 (GDEGFTGGDGKNAGGAG).

It is found in the secreted. This is Glycine/glutamate-rich protein sgp1 (sgp1) from Glossina morsitans morsitans (Savannah tsetse fly).